The sequence spans 130 residues: Follitropin subunit beta (130 aa).

A signal peptide spans 1–20 (MMKSIQLCILLWCLRAVCCH). 6 disulfide bridges follow: Cys-22/Cys-70, Cys-36/Cys-85, Cys-39/Cys-123, Cys-47/Cys-101, Cys-51/Cys-103, and Cys-106/Cys-113. N-linked (GlcNAc...) asparagine glycans are attached at residues Asn-26 and Asn-43.

Belongs to the glycoprotein hormones subunit beta family. Heterodimer. The active follitropin is a heterodimer composed of an alpha chain/CGA shared with other hormones and a unique beta chain/FSHB shown here.

The protein resides in the secreted. In terms of biological role, together with the alpha chain CGA constitutes follitropin, the follicle-stimulating hormone, and provides its biological specificity to the hormone heterodimer. Binds FSHR, a G protein-coupled receptor, on target cells to activate downstream signaling pathways. Follitropin is involved in follicle development and spermatogenesis in reproductive organs. This Rattus norvegicus (Rat) protein is Follitropin subunit beta (Fshb).